Reading from the N-terminus, the 1480-residue chain is Cystic fibrosis transmembrane conductance regulator (1480 aa).

Residues 1–77 (MQRSPLEKAS…KLINALRRCF (77 aa)) are Cytoplasmic-facing. Residues 78–98 (FWRFMFYGILLYLGEVTKAVQ) traverse the membrane as a helical segment. In terms of domain architecture, ABC transmembrane type-1 1 spans 81 to 365 (FMFYGILLYL…WAVQTWYDSL (285 aa)). Residues 99–122 (PLLLGRIIASYDPDNKTERSIAIY) lie on the Extracellular side of the membrane. The chain crosses the membrane as a helical span at residues 123-146 (LGIGLCLLFIVRTLLLHPAIFGLH). The Cytoplasmic segment spans residues 147–195 (HIGMQMRIAMFSLIYKKTLKLSSRVLDKISIGQLVSLLSNNLNKFDEGL). The helical transmembrane segment at 196 to 216 (ALAHFVWIAPLQVALLMGLIW) threads the bilayer. Residues 217-222 (ELLQAS) lie on the Extracellular side of the membrane. A helical transmembrane segment spans residues 223–243 (VFCGLGFLIVLALFQAGLGRM). Over 244 to 298 (MMKYRDQRAGKINERLVITSEMIENIQSVKAYCWEEAMEKMIENLRQTELKLTRK) the chain is Cytoplasmic. A helical membrane pass occupies residues 299–319 (AAYVRYFNSSAFFFSGFFVVF). At 320-339 (LSVLPYALIKGIILRKIFTT) the chain is on the extracellular side. A helical transmembrane segment spans residues 340-358 (ISFCIVLRMAVTRQFPWAV). Over 359–858 (QTWYDSLGAI…YLRYITLHKS (500 aa)) the chain is Cytoplasmic. ATP contacts are provided by residues Trp401, Ser434, 458-465 (GSTGAGKT), and Gln493. Residues 423–646 (NGHDNLFFSN…RPDFSSKLMG (224 aa)) form the ABC transporter 1 domain. Cys524 carries the S-palmitoyl cysteine lipid modification. 2 positions are modified to phosphoserine: Ser549 and Ser660. The tract at residues 654–831 (SSERRNSILT…EEINEEDLKE (178 aa)) is disordered R region. Residue Ser670 is modified to Phosphoserine; by PKA. Ser686 carries the phosphoserine modification. A Glycyl lysine isopeptide (Lys-Gly) (interchain with G-Cter in ubiquitin) cross-link involves residue Lys688. A phosphoserine mark is found at Ser700 and Ser712. Residue Thr717 is modified to Phosphothreonine. Phosphoserine is present on residues Ser737, Ser753, Ser768, Ser790, Ser795, and Ser813. The helical transmembrane segment at 859–879 (LIFVLIWCLVIFLAEVAASLV) threads the bilayer. The ABC transmembrane type-1 2 domain maps to 859 to 1155 (LIFVLIWCLV…AVNSSIDVDS (297 aa)). The Extracellular segment spans residues 880–918 (VLWLLGNTSFQDKGNSTYSRNNSYAVIITNTSSYYVFYI). Residues Asn894, Asn900, and Asn909 are each glycosylated (N-linked (GlcNAc...) asparagine). Residues 919–939 (YVGVADTLLALGFFRGLPLVH) form a discontinuously helical membrane-spanning segment. Topologically, residues 940–990 (TLITVSKILHHKMLHSVLQAPMSTLNTLKAGGILNRFSKDIAILDDLLPLT) are cytoplasmic. A helical transmembrane segment spans residues 991–1011 (IFDFIQLLLIVIGAIAVVSVL). Residues 1012-1013 (QP) are Extracellular-facing. The helical transmembrane segment at 1014 to 1034 (YIFLATVPVIAAFILLRAYFL) threads the bilayer. Residues 1035-1095 (QTSQQLKQLE…TANWFLYLST (61 aa)) lie on the Cytoplasmic side of the membrane. The helical transmembrane segment at 1096-1116 (LRWFQMRIEMIFVIFFIAVTF) threads the bilayer. Topologically, residues 1117-1130 (ISILTTGEGEGTVG) are extracellular. The chain crosses the membrane as a helical span at residues 1131–1151 (IILTLAMNIMSTLQWAVNSSI). Residues 1152 to 1480 (DVDSLMRSVS…TEEEVQETRL (329 aa)) are Cytoplasmic-facing. The region spanning 1210 to 1443 (MTIKDLTAKY…KSLFQQAISH (234 aa)) is the ABC transporter 2 domain. Residues Tyr1219 and 1244 to 1251 (GRTGSGKS) each bind ATP. An interaction with GORASP2 region spans residues 1386–1480 (RALKQAFADC…TEEEVQETRL (95 aa)). The S-palmitoyl cysteine moiety is linked to residue Cys1395. Phosphoserine occurs at positions 1444 and 1456. Residues 1452–1480 (HRNSSKYKSRPQIASLKEETEEEVQETRL) form a disordered region. Residues 1470–1480 (ETEEEVQETRL) are compositionally biased toward acidic residues. The PDZ-binding signature appears at 1478–1480 (TRL).

The protein belongs to the ABC transporter superfamily. ABCC family. CFTR transporter (TC 3.A.1.202) subfamily. Monomer; does not require oligomerization for channel activity. May form oligomers in the membrane. Interacts with SLC26A3, SLC26A6 and NHERF1. Interacts with SHANK2. Interacts with MYO6. Interacts (via C-terminus) with GOPC (via PDZ domain); this promotes CFTR internalization and thereby decreases channel activity. Interacts with SLC4A7 through NHERF1. Found in a complex with MYO5B and RAB11A. Interacts with ANO1. Interacts with SLC26A8. Interacts with AHCYL1; the interaction increases CFTR activity. Interacts with CSE1L. The core-glycosylated form interacts with GORASP2 (via PDZ GRASP-type 1 domain) in respone to ER stress. Interacts with MARCHF2; the interaction leads to CFTR ubiqtuitination and degradation. Interacts with ADGRG2. In terms of processing, N-glycosylated. Phosphorylated; cAMP treatment promotes phosphorylation and activates the channel. Dephosphorylation decreases the ATPase activity (in vitro). Phosphorylation at PKA sites activates the channel. Phosphorylation at PKC sites enhances the response to phosphorylation by PKA. Phosphorylated by AMPK; this inhibits channel activity. Post-translationally, ubiquitinated, leading to its degradation in the lysosome. Deubiquitination by USP10 in early endosomes enhances its endocytic recycling to the cell membrane. Ubiquitinated by RNF185 during ER stress. Ubiquitinated by MARCHF2.

The protein resides in the apical cell membrane. It localises to the early endosome membrane. Its subcellular location is the cell membrane. The protein localises to the recycling endosome membrane. It is found in the endoplasmic reticulum membrane. The protein resides in the nucleus. The catalysed reaction is ATP + H2O + closed Cl(-) channel = ADP + phosphate + open Cl(-) channel.. The enzyme catalyses chloride(in) = chloride(out). It carries out the reaction hydrogencarbonate(in) = hydrogencarbonate(out). It catalyses the reaction ATP + H2O = ADP + phosphate + H(+). In terms of biological role, epithelial ion channel that plays an important role in the regulation of epithelial ion and water transport and fluid homeostasis. Mediates the transport of chloride ions across the cell membrane. Possesses an intrinsic ATPase activity and utilizes ATP to gate its channel; the passive flow of anions through the channel is gated by cycles of ATP binding and hydrolysis by the ATP-binding domains. The ion channel is also permeable to HCO(3)(-); selectivity depends on the extracellular chloride concentration. Exerts its function also by modulating the activity of other ion channels and transporters. Contributes to the regulation of the pH and the ion content of the epithelial fluid layer. Modulates the activity of the epithelial sodium channel (ENaC) complex, in part by regulating the cell surface expression of the ENaC complex. May regulate bicarbonate secretion and salvage in epithelial cells by regulating the transporter SLC4A7. Can inhibit the chloride channel activity of ANO1. Plays a role in the chloride and bicarbonate homeostasis during sperm epididymal maturation and capacitation. The sequence is that of Cystic fibrosis transmembrane conductance regulator from Plecturocebus moloch (Dusky titi monkey).